A 400-amino-acid polypeptide reads, in one-letter code: MEKPSRNTYIPLTIVGECPECREYHRGRECPECGQDLRRPRLRPQFGGRGPHTLFYLEKYDWDTMKAVRRIAQALRKHHRHFGIAGMKDKRAVTSQRVTVRGVPPGVLARLRIRDLKIVPMGRARRKLRPGDLWGNRFVITVRGAKVRRLPEALRTVRELGGVPNYYGLQRFGSRRPVTHVVGKYVVLEDWEKAVKTFLTLEYPRESPEALEARRWLKEHWGEFKEALRRFPKFLDYERHILEHLARHPHDYINAFRRLPMWIRRMFVHAYQSYLFNRILSERIARGLPVHRPVEGDVTQDGLPTVPLPGFRTELSDGPQGEIEREVLEEEGVRLEDFEIKSMPELSAGGDRKPALLRVYGLRAEAIGDDTVRFTFSLPRGGYATTVLRELLGSEGVYAD.

Asp-89 (nucleophile) is an active-site residue. The 196-residue stretch at 162–357 (GVPNYYGLQR…AGGDRKPALL (196 aa)) folds into the TRUD domain.

This sequence belongs to the pseudouridine synthase TruD family.

The catalysed reaction is uridine(13) in tRNA = pseudouridine(13) in tRNA. Functionally, could be responsible for synthesis of pseudouridine from uracil-13 in transfer RNAs. The polypeptide is Probable tRNA pseudouridine synthase D (Methanopyrus kandleri (strain AV19 / DSM 6324 / JCM 9639 / NBRC 100938)).